The sequence spans 142 residues: Nucleoside diphosphate kinase (142 aa).

K11, F59, R87, T93, R104, and N114 together coordinate ATP. Residue H117 is the Pros-phosphohistidine intermediate of the active site.

It belongs to the NDK family. As to quaternary structure, homotetramer. It depends on Mg(2+) as a cofactor.

The protein localises to the cytoplasm. It catalyses the reaction a 2'-deoxyribonucleoside 5'-diphosphate + ATP = a 2'-deoxyribonucleoside 5'-triphosphate + ADP. It carries out the reaction a ribonucleoside 5'-diphosphate + ATP = a ribonucleoside 5'-triphosphate + ADP. Its function is as follows. Major role in the synthesis of nucleoside triphosphates other than ATP. The ATP gamma phosphate is transferred to the NDP beta phosphate via a ping-pong mechanism, using a phosphorylated active-site intermediate. The chain is Nucleoside diphosphate kinase from Yersinia pestis bv. Antiqua (strain Antiqua).